We begin with the raw amino-acid sequence, 1388 residues long: CRISPR-associated endonuclease Cas9 2 (1388 aa).

D10 (for RuvC-like nuclease domain) is an active-site residue. Residues D10, E763, and E767 each coordinate Mg(2+). Residues 771 to 928 (TNQGKSNSQQ…DKAGFIQRQL (158 aa)) enclose the HNH Cas9-type domain. H847 serves as the catalytic Proton acceptor for HNH nuclease domain. Position 990 (H990) interacts with Mg(2+). Positions 1100–1109 (EQNHGLDRGK) are enriched in basic and acidic residues. Positions 1100 to 1130 (EQNHGLDRGKPKGLFNANLSSKPKPNSNENL) are disordered. The interval 1102-1388 (NHGLDRGKPK…RIDLAKLGEG (287 aa)) is PAM-interacting domain (PI). Over residues 1116-1129 (ANLSSKPKPNSNEN) the composition is skewed to polar residues.

It belongs to the CRISPR-associated protein Cas9 family. Subtype II-A subfamily. Monomer. Binds crRNA and tracrRNA. Requires Mg(2+) as cofactor.

Functionally, CRISPR (clustered regularly interspaced short palindromic repeat) is an adaptive immune system that provides protection against mobile genetic elements (viruses, transposable elements and conjugative plasmids). CRISPR clusters contain spacers, sequences complementary to antecedent mobile elements, and target invading nucleic acids. CRISPR clusters are transcribed and processed into CRISPR RNA (crRNA). In type II CRISPR systems correct processing of pre-crRNA requires a trans-encoded small RNA (tracrRNA), endogenous ribonuclease 3 (rnc) and this protein. The tracrRNA serves as a guide for ribonuclease 3-aided processing of pre-crRNA. Subsequently Cas9/crRNA/tracrRNA endonucleolytically cleaves linear or circular dsDNA target complementary to the spacer yielding blunt ends; Cas9 is inactive in the absence of the 2 guide RNAs (gRNA). Cas9 recognizes a 3'-G-rich protospacer adjacent motif (PAM, GGG in this organism) in the CRISPR repeat sequences to help distinguish self versus nonself, as targets within the bacterial CRISPR locus do not have PAMs. PAM recognition is also required for catalytic activity. Complements the gRNA coprocessing defect in a cas9 deletion in S.pyogenes strain 370, and cuts target DNA in Cas9:gRNAs mixing experiments with S.mutans strain UA159. This is CRISPR-associated endonuclease Cas9 2 from Streptococcus thermophilus (strain ATCC BAA-491 / LMD-9).